The following is a 169-amino-acid chain: 3-hydroxyacyl-[acyl-carrier-protein] dehydratase FabZ (169 aa).

The active site involves His74.

It belongs to the thioester dehydratase family. FabZ subfamily.

The protein resides in the cytoplasm. The catalysed reaction is a (3R)-hydroxyacyl-[ACP] = a (2E)-enoyl-[ACP] + H2O. In terms of biological role, involved in unsaturated fatty acids biosynthesis. Catalyzes the dehydration of short chain beta-hydroxyacyl-ACPs and long chain saturated and unsaturated beta-hydroxyacyl-ACPs. The polypeptide is 3-hydroxyacyl-[acyl-carrier-protein] dehydratase FabZ (Gluconobacter oxydans (strain 621H) (Gluconobacter suboxydans)).